The primary structure comprises 37 residues: Large ribosomal subunit protein bL36 (37 aa).

This sequence belongs to the bacterial ribosomal protein bL36 family.

The sequence is that of Large ribosomal subunit protein bL36 from Nocardia farcinica (strain IFM 10152).